Reading from the N-terminus, the 110-residue chain is Large ribosomal subunit protein uL24 (110 aa).

The protein belongs to the universal ribosomal protein uL24 family. In terms of assembly, part of the 50S ribosomal subunit.

Functionally, one of two assembly initiator proteins, it binds directly to the 5'-end of the 23S rRNA, where it nucleates assembly of the 50S subunit. In terms of biological role, one of the proteins that surrounds the polypeptide exit tunnel on the outside of the subunit. This Frankia alni (strain DSM 45986 / CECT 9034 / ACN14a) protein is Large ribosomal subunit protein uL24.